We begin with the raw amino-acid sequence, 278 residues long: Phosphonates import ATP-binding protein PhnC (278 aa).

The 249-residue stretch at 25–273 (LAVKGLVKAY…IIQDIYSDES (249 aa)) folds into the ABC transporter domain. Position 58-65 (58-65 (GRSGAGKS)) interacts with ATP.

It belongs to the ABC transporter superfamily. Phosphonates importer (TC 3.A.1.9.1) family. As to quaternary structure, the complex is composed of two ATP-binding proteins (PhnC), two transmembrane proteins (PhnE) and a solute-binding protein (PhnD).

The protein localises to the cell inner membrane. It catalyses the reaction phosphonate(out) + ATP + H2O = phosphonate(in) + ADP + phosphate + H(+). Functionally, part of the ABC transporter complex PhnCDE involved in phosphonates import. Responsible for energy coupling to the transport system. The chain is Phosphonates import ATP-binding protein PhnC from Yersinia pestis bv. Antiqua (strain Antiqua).